A 360-amino-acid polypeptide reads, in one-letter code: Phospho-N-acetylmuramoyl-pentapeptide-transferase (360 aa).

The next 10 helical transmembrane spans lie at 27–47 (IVSL…LIGW), 72–92 (PTMG…MWAY), 94–114 (SNPY…VGFV), 132–152 (WKYF…YCIG), 168–188 (IMPQ…VGTS), 199–219 (GLAI…AWAT), 236–256 (AGEL…FLWF), 263–283 (VFMG…IAVL), 288–308 (FLLV…ILQV), and 338–358 (VIVR…ATLK).

Belongs to the glycosyltransferase 4 family. MraY subfamily. It depends on Mg(2+) as a cofactor.

The protein localises to the cell inner membrane. The enzyme catalyses UDP-N-acetyl-alpha-D-muramoyl-L-alanyl-gamma-D-glutamyl-meso-2,6-diaminopimeloyl-D-alanyl-D-alanine + di-trans,octa-cis-undecaprenyl phosphate = di-trans,octa-cis-undecaprenyl diphospho-N-acetyl-alpha-D-muramoyl-L-alanyl-D-glutamyl-meso-2,6-diaminopimeloyl-D-alanyl-D-alanine + UMP. The protein operates within cell wall biogenesis; peptidoglycan biosynthesis. In terms of biological role, catalyzes the initial step of the lipid cycle reactions in the biosynthesis of the cell wall peptidoglycan: transfers peptidoglycan precursor phospho-MurNAc-pentapeptide from UDP-MurNAc-pentapeptide onto the lipid carrier undecaprenyl phosphate, yielding undecaprenyl-pyrophosphoryl-MurNAc-pentapeptide, known as lipid I. The sequence is that of Phospho-N-acetylmuramoyl-pentapeptide-transferase from Edwardsiella ictaluri (strain 93-146).